Reading from the N-terminus, the 342-residue chain is L-threonine 3-dehydrogenase (342 aa).

Zn(2+) is bound at residue C38. Active-site charge relay system residues include T40 and H43. Residues H63, E64, C93, C96, C99, and C107 each contribute to the Zn(2+) site. Residues I175, D195, R200, 262 to 264 (LGI), and 286 to 287 (IY) each bind NAD(+).

It belongs to the zinc-containing alcohol dehydrogenase family. As to quaternary structure, homotetramer. The cofactor is Zn(2+).

It is found in the cytoplasm. It carries out the reaction L-threonine + NAD(+) = (2S)-2-amino-3-oxobutanoate + NADH + H(+). It participates in amino-acid degradation; L-threonine degradation via oxydo-reductase pathway; glycine from L-threonine: step 1/2. Its function is as follows. Catalyzes the NAD(+)-dependent oxidation of L-threonine to 2-amino-3-ketobutyrate. The sequence is that of L-threonine 3-dehydrogenase from Aeromonas hydrophila subsp. hydrophila (strain ATCC 7966 / DSM 30187 / BCRC 13018 / CCUG 14551 / JCM 1027 / KCTC 2358 / NCIMB 9240 / NCTC 8049).